The chain runs to 293 residues: Putative F-box/kelch-repeat protein At4g34170 (293 aa).

The F-box domain maps to 9 to 55; the sequence is VKTMLMLHDDLILNCLARVSRSNHPTLSLVCKRFHSLLASVELYQTR. 3 Kelch repeats span residues 94 to 140, 141 to 187, and 226 to 272; these read NIDA…TLDG, KIYV…ESVR, and SYCV…LADY.

The chain is Putative F-box/kelch-repeat protein At4g34170 from Arabidopsis thaliana (Mouse-ear cress).